The following is a 323-amino-acid chain: GTP 3',8-cyclase (323 aa).

The 223-residue stretch at 4–226 (TFQRQINYLR…LEPFPDLATN (223 aa)) folds into the Radical SAM core domain. Arginine 13 lines the GTP pocket. Positions 20 and 24 each coordinate [4Fe-4S] cluster. S-adenosyl-L-methionine is bound at residue tyrosine 26. Cysteine 27 contributes to the [4Fe-4S] cluster binding site. GTP is bound at residue arginine 63. An S-adenosyl-L-methionine-binding site is contributed by glycine 67. Threonine 94 contacts GTP. Residue serine 118 participates in S-adenosyl-L-methionine binding. Lysine 155 contributes to the GTP binding site. Methionine 189 contacts S-adenosyl-L-methionine. Positions 252 and 255 each coordinate [4Fe-4S] cluster. 257-259 (RLR) provides a ligand contact to GTP. Cysteine 269 is a [4Fe-4S] cluster binding site.

This sequence belongs to the radical SAM superfamily. MoaA family. In terms of assembly, monomer and homodimer. The cofactor is [4Fe-4S] cluster.

It catalyses the reaction GTP + AH2 + S-adenosyl-L-methionine = (8S)-3',8-cyclo-7,8-dihydroguanosine 5'-triphosphate + 5'-deoxyadenosine + L-methionine + A + H(+). Its pathway is cofactor biosynthesis; molybdopterin biosynthesis. Catalyzes the cyclization of GTP to (8S)-3',8-cyclo-7,8-dihydroguanosine 5'-triphosphate. This chain is GTP 3',8-cyclase, found in Moorella thermoacetica (strain ATCC 39073 / JCM 9320).